The chain runs to 225 residues: 2-C-methyl-D-erythritol 4-phosphate cytidylyltransferase (225 aa).

It belongs to the IspD/TarI cytidylyltransferase family. IspD subfamily.

The enzyme catalyses 2-C-methyl-D-erythritol 4-phosphate + CTP + H(+) = 4-CDP-2-C-methyl-D-erythritol + diphosphate. It participates in isoprenoid biosynthesis; isopentenyl diphosphate biosynthesis via DXP pathway; isopentenyl diphosphate from 1-deoxy-D-xylulose 5-phosphate: step 2/6. Catalyzes the formation of 4-diphosphocytidyl-2-C-methyl-D-erythritol from CTP and 2-C-methyl-D-erythritol 4-phosphate (MEP). The sequence is that of 2-C-methyl-D-erythritol 4-phosphate cytidylyltransferase from Haemophilus influenzae (strain PittGG).